Consider the following 456-residue polypeptide: MDEDGEKRVRTKRLCSPESSDKKSGYEVDWVRDLPESLICHVLLNLSTKDVIKNCVLSTKWRYLWRYVPGLDLDCSDFTEYNTFVSFVDRFLSTNTESYLNKFKLGFDCDLVGDEETGNAQMARWINDVVKRKVQHLDLEWGALEIPPIVYVCKSLVSLKLCGVILPIPEFVCLPSVKVIVLDWVKFANDLALEMLISGCLVLKSLTLCRSNNDNVKVLRVRSQSLLSFNYNGPNTMGPEYEELIVEIDTPKLQDLTLSHRMTASFIIKNRSSLVGAHINIEFNFCFGEKFDPKNLPKREMIRNFLVGISGVKNMAIAACTLEVIYDYSRCEPLPLFRNLCLLSVEFYEDRWEMLPFFLESCPNLKSLVVGSNRYRMERTSIISGHRCLLSSLEYVEIETPLTGEVFEMKLVSYLLENSPILKKLTIHLHDNSRKKAECEILTIPRRSSSCQVILL.

Positions 1 to 23 are disordered; sequence MDEDGEKRVRTKRLCSPESSDKK. The F-box domain occupies 28-74; that stretch reads VDWVRDLPESLICHVLLNLSTKDVIKNCVLSTKWRYLWRYVPGLDLD. LRR repeat units follow at residues 136–163, 185–210, 234–260, and 347–372; these read HLDL…KLCG, VKFA…TLCR, PNTM…TLSH, and FYED…VVGS. The region spanning 377 to 429 is the FBD domain; it reads MERTSIISGHRCLLSSLEYVEIETPLTGEVFEMKLVSYLLENSPILKKLTIHL.

In Arabidopsis thaliana (Mouse-ear cress), this protein is Putative F-box/FBD/LRR-repeat protein At1g66300.